Reading from the N-terminus, the 124-residue chain is MHLQPVICKLRLHSNSRRLYHILHLSLITINSLSNSTHHLHSKHRWKHNRNRAVGLVVPSRVLVANWEMLLYLALVLLLVVILSTAFFSILSRNICFSDLNLPNDFRSLKERKTHTEYGYVMVA.

The helical transmembrane segment at 70 to 90 threads the bilayer; it reads LLYLALVLLLVVILSTAFFSI.

It localises to the membrane. This is an uncharacterized protein from Saccharomyces cerevisiae (strain ATCC 204508 / S288c) (Baker's yeast).